The following is an 81-amino-acid chain: Short neurotoxin 1 (81 aa).

The N-terminal stretch at M1–T21 is a signal peptide. 4 cysteine pairs are disulfide-bonded: C24/C43, C38/C60, C62/C73, and C74/C79.

The protein belongs to the three-finger toxin family. Short-chain subfamily. Type I alpha-neurotoxin sub-subfamily. As to expression, expressed by the venom gland.

Its subcellular location is the secreted. Functionally, binds to muscle nicotinic acetylcholine receptor (nAChR) and inhibit acetylcholine from binding to the receptor, thereby impairing neuromuscular transmission. The protein is Short neurotoxin 1 of Cryptophis nigrescens (Eastern small-eyed snake).